Here is a 346-residue protein sequence, read N- to C-terminus: MERLGQPAYRSRQLWQGLYRDRIASLDQFTTLPIPLREELKSSGWAIAFPFVQKRFTSTDGTVRYLLQFSDGQSVETVWMPEGDGGEQGDGSEDGPSYDRATICVSSQVGCAVDCQFCMTALLGLLRNLSAGEIVGQILAVLKDENVDVEKSRINLVFMGQGEPFLNFDNFVKAVTLLAEAVGIPESRMTVSTSGIVPRIVDFGQLAIRPKLAISLNASNDESRRELMPITKKWTLEKLMSAAREFPLRNRERMTFEYVLLGGVNDSEQNAREVVQLLRGLRAKVNLIAWNPGPEIPFSTPDPQHVEAFQQILIDAGIPTFIRKPRGRDIFAACGQLKRTELVTLS.

The active-site Proton acceptor is the E76. The Radical SAM core domain occupies S97 to D329. Cysteines 104 and 334 form a disulfide. Positions 111, 115, and 118 each coordinate [4Fe-4S] cluster. S-adenosyl-L-methionine-binding positions include G162–E163, S192, S215–N217, and N291. The active-site S-methylcysteine intermediate is C334.

This sequence belongs to the radical SAM superfamily. RlmN family. [4Fe-4S] cluster serves as cofactor.

It is found in the cytoplasm. The catalysed reaction is adenosine(2503) in 23S rRNA + 2 reduced [2Fe-2S]-[ferredoxin] + 2 S-adenosyl-L-methionine = 2-methyladenosine(2503) in 23S rRNA + 5'-deoxyadenosine + L-methionine + 2 oxidized [2Fe-2S]-[ferredoxin] + S-adenosyl-L-homocysteine. The enzyme catalyses adenosine(37) in tRNA + 2 reduced [2Fe-2S]-[ferredoxin] + 2 S-adenosyl-L-methionine = 2-methyladenosine(37) in tRNA + 5'-deoxyadenosine + L-methionine + 2 oxidized [2Fe-2S]-[ferredoxin] + S-adenosyl-L-homocysteine. In terms of biological role, specifically methylates position 2 of adenine 2503 in 23S rRNA and position 2 of adenine 37 in tRNAs. The chain is Probable dual-specificity RNA methyltransferase RlmN from Koribacter versatilis (strain Ellin345).